We begin with the raw amino-acid sequence, 21 residues long: Natriuretic peptide TsNP (21 aa).

Cys-5 and Cys-21 form a disulfide bridge.

In terms of tissue distribution, expressed by the venom gland.

It localises to the secreted. Scorpion venom natriuretic peptide that increases the perfusion pressure, glomerular filtration rate and urinary flow in the isolated perfused rat kidney assay. Induces a decrease of the percentages of renal transport for sodium, potassium and chloride and an increase of the urinary cGMP concentration. Also down-regulates the mRNA expression of natriuretic peptide receptor 1 (NPR1) in the kidneys whereas it up-regulates those of NPR2, NPR3 and guanylyl cyclase C (GUCY2C) mRNAs. May exhibit hypotensive and vasodepressor activities. In Tityus serrulatus (Brazilian scorpion), this protein is Natriuretic peptide TsNP.